A 168-amino-acid chain; its full sequence is Small ribosomal subunit protein uS5 (168 aa).

In terms of domain architecture, S5 DRBM spans 11 to 74; sequence YSEKVVKIDR…ESAKKHLVKI (64 aa).

Belongs to the universal ribosomal protein uS5 family. In terms of assembly, part of the 30S ribosomal subunit. Contacts proteins S4 and S8.

With S4 and S12 plays an important role in translational accuracy. In terms of biological role, located at the back of the 30S subunit body where it stabilizes the conformation of the head with respect to the body. The protein is Small ribosomal subunit protein uS5 of Leptospira interrogans serogroup Icterohaemorrhagiae serovar copenhageni (strain Fiocruz L1-130).